A 342-amino-acid chain; its full sequence is Muscleblind-like protein 3 (342 aa).

4 C3H1-type zinc fingers span residues 14-42 (WLTLEVCREFQRGTCSRADAECRFAHPPR), 48-74 (NGRVVACFDSLKGRCTRENCKYLHPPP), 174-202 (TDRLEVCREFQRGNCTRGESECRYAHPTD), and 210-236 (DNSVTICMDYIKGRCSREKCKYFHPPP). Over residues 316-326 (PSTVSTATPPA) the composition is skewed to low complexity. Residues 316 to 342 (PSTVSTATPPASNVPYVPTTTGNQLKY) are disordered. Over residues 333–342 (PTTTGNQLKY) the composition is skewed to polar residues.

This sequence belongs to the muscleblind family.

Its subcellular location is the nucleus. The protein localises to the cytoplasm. Functionally, mediates pre-mRNA alternative splicing regulation. Acts either as activator or repressor of splicing on specific pre-mRNA targets. Inhibits cardiac troponin-T (TNNT2) pre-mRNA exon inclusion but induces insulin receptor (IR) pre-mRNA exon inclusion in muscle. Antagonizes the alternative splicing activity pattern of CELF proteins. Could inhibit terminal muscle differentiation, acting at approximately the time of myogenin induction. The chain is Muscleblind-like protein 3 (Mbnl3) from Mus musculus (Mouse).